Here is a 246-residue protein sequence, read N- to C-terminus: Probable phosphatase Tola_0828 (246 aa).

His-8, His-10, His-16, His-41, Glu-74, His-102, His-132, Asp-193, and His-195 together coordinate Zn(2+).

The protein belongs to the PHP family. Zn(2+) serves as cofactor.

This is Probable phosphatase Tola_0828 from Tolumonas auensis (strain DSM 9187 / NBRC 110442 / TA 4).